We begin with the raw amino-acid sequence, 216 residues long: Adenylate kinase (216 aa).

10–15 (GAGKGT) is an ATP binding site. The interval 30-59 (STGDMLREAVKADTPLGIEAKKVMDVGGLI) is NMP. Residues Thr31, Arg36, 57–59 (GLI), 85–88 (GFPR), and Gln92 contribute to the AMP site. The tract at residues 122-159 (GRRAHLTSGRTYHIVYNPPKVEGIDDITGEELIQRTDD) is LID. ATP contacts are provided by residues Arg123 and 132–133 (TY). Arg156 and Arg167 together coordinate AMP. An ATP-binding site is contributed by Gly202.

This sequence belongs to the adenylate kinase family. Monomer.

The protein localises to the cytoplasm. It carries out the reaction AMP + ATP = 2 ADP. Its pathway is purine metabolism; AMP biosynthesis via salvage pathway; AMP from ADP: step 1/1. Functionally, catalyzes the reversible transfer of the terminal phosphate group between ATP and AMP. Plays an important role in cellular energy homeostasis and in adenine nucleotide metabolism. The protein is Adenylate kinase of Ruthia magnifica subsp. Calyptogena magnifica.